Here is a 366-residue protein sequence, read N- to C-terminus: tRNA(Met) cytidine acetate ligase (366 aa).

ATP contacts are provided by residues 7 to 20 (IAEFNPFHYGHQYL), Gly96, Asn152, and Arg175.

It belongs to the TmcAL family.

Its subcellular location is the cytoplasm. The catalysed reaction is cytidine(34) in elongator tRNA(Met) + acetate + ATP = N(4)-acetylcytidine(34) in elongator tRNA(Met) + AMP + diphosphate. Catalyzes the formation of N(4)-acetylcytidine (ac(4)C) at the wobble position of elongator tRNA(Met), using acetate and ATP as substrates. First activates an acetate ion to form acetyladenylate (Ac-AMP) and then transfers the acetyl group to tRNA to form ac(4)C34. The protein is tRNA(Met) cytidine acetate ligase of Streptococcus equi subsp. zooepidemicus (strain MGCS10565).